The following is a 67-amino-acid chain: DNA-directed RNA polymerase subunit omega (67 aa).

It belongs to the RNA polymerase subunit omega family. As to quaternary structure, the RNAP catalytic core consists of 2 alpha, 1 beta, 1 beta' and 1 omega subunit. When a sigma factor is associated with the core the holoenzyme is formed, which can initiate transcription.

The enzyme catalyses RNA(n) + a ribonucleoside 5'-triphosphate = RNA(n+1) + diphosphate. Promotes RNA polymerase assembly. Latches the N- and C-terminal regions of the beta' subunit thereby facilitating its interaction with the beta and alpha subunits. This chain is DNA-directed RNA polymerase subunit omega, found in Ralstonia nicotianae (strain ATCC BAA-1114 / GMI1000) (Ralstonia solanacearum).